The primary structure comprises 93 residues: Microcin N immunity protein (93 aa).

The next 3 helical transmembrane spans lie at 3–23 (FLNFAFSPVFFSIMACYFIVW), 36–56 (LSIIIISFLICFIYPWLNYKI), and 68–88 (LFCFLSSLVAVVINLIVYFIL).

This sequence belongs to the MceB microcin immunity protein family.

The protein resides in the cell inner membrane. Probably able to protect the producing cell against microcin N (microcin 24). The sequence is that of Microcin N immunity protein from Escherichia coli.